A 473-amino-acid chain; its full sequence is Crt homolog 1 (473 aa).

The Cytoplasmic portion of the chain corresponds to 1–49 (MTNNDKEKQPLLSSINNEDDNGATINIVEPVPWYSNIPQKIKNSMSKET). The chain crosses the membrane as a helical span at residues 50–70 (ITILIYVVLYVTSGVINSVLL). The Vacuolar segment spans residues 71-80 (KKVMNKFTNY). Residues 81–101 (AFFLSQLTNFGYVPIFGAVTA) form a helical membrane-spanning segment. Topologically, residues 102 to 121 (YKIFFTKDIPQETRDFPTRK) are cytoplasmic. The chain crosses the membrane as a helical span at residues 122 to 142 (FAIMGALDAITGFFVVIGGVS). The Vacuolar portion of the chain corresponds to 143–146 (TSGP). A helical transmembrane segment spans residues 147-167 (LQQLLNQAIIPFTMIASFIFL). The Cytoplasmic segment spans residues 168–175 (KERYSLIQ). A helical membrane pass occupies residues 176 to 196 (LGGALVIIGGVVTSLIPSLLG). Over 197 to 207 (GSSGGNKPFWN) the chain is Vacuolar. The chain crosses the membrane as a helical span at residues 208–228 (FFYLLSVIPGALSNVYKDIGF). Topologically, residues 229–248 (QAVADMDVWYLQYWDSLYQS) are cytoplasmic. Residues 249 to 269 (IFGLFLFPVNNWLPPPATVKF) form a helical membrane-spanning segment. Over 270–322 (EQILPFMKEGAECLAGINSIIPSYINGTSSFTATSCTYAPDATITCDDCHNAW) the chain is Vacuolar. Asn-295 carries an N-linked (GlcNAc...) asparagine glycan. The helical transmembrane segment at 323 to 343 (IVIILYMTINIIYNIFILLVL) threads the bilayer. Topologically, residues 344-352 (KHAGATVYS) are cytoplasmic. A helical membrane pass occupies residues 353-373 (IANTLRLPLTNIVFSIHFIMG). Ser-374 is a topological domain (vacuolar). A helical transmembrane segment spans residues 375-395 (AVSPFSGLSVAGLVIILVGLG). The Cytoplasmic segment spans residues 396–473 (GYRVGSMIKQ…AANNNNYGDA (78 aa)).

This sequence belongs to the CRT-like transporter family.

Its subcellular location is the vacuole membrane. Nutrient transporter. Involved in maintaining the osmotic homeostasis of the digestive vacuole. The sequence is that of Crt homolog 1 (crtp1) from Dictyostelium discoideum (Social amoeba).